The following is a 923-amino-acid chain: Tyrosine-protein kinase receptor torso (923 aa).

A signal peptide spans Met1–Gln20. Residues Gly21–Lys399 lie on the Extracellular side of the membrane. Residues Asn37, Asn63, Asn107, Asn142, Asn146, Asn287, Asn298, Asn314, Asn326, Asn342, Asn348, and Asn377 are each glycosylated (N-linked (GlcNAc...) asparagine). Residues Leu400 to Cys420 traverse the membrane as a helical segment. The Cytoplasmic portion of the chain corresponds to Arg421 to Asn923. The region spanning Val475 to Gly874 is the Protein kinase domain. ATP is bound by residues Leu481–Val489 and Lys502. Ser608 carries the phosphoserine modification. The tract at residues Tyr656 to Asp687 is disordered. Residues Pro676–Asp687 are compositionally biased toward basic and acidic residues. The active-site Proton acceptor is Asp741.

This sequence belongs to the protein kinase superfamily. Tyr protein kinase family. Requires Mg(2+) as cofactor. In terms of processing, may be auto-phosphorylated on tyrosine residues.

It is found in the membrane. The enzyme catalyses L-tyrosyl-[protein] + ATP = O-phospho-L-tyrosyl-[protein] + ADP + H(+). In terms of biological role, probable receptor tyrosine kinase which is required for determination of anterior and posterior terminal structures in the embryo. During postembryonic development, involved in the initiation of metamorphosis probably by inducing the production of ecdysone in response to prothoracicotropic hormone Ptth. Binding to Ptth stimulates activation of canonical MAPK signaling leading to ERK phosphorylation. In Drosophila melanogaster (Fruit fly), this protein is Tyrosine-protein kinase receptor torso (tor).